The chain runs to 171 residues: Lipoprotein signal peptidase (171 aa).

The next 4 helical transmembrane spans lie at 15-35, 47-67, 72-92, and 107-127; these read WLWL…IVMD, VLPF…SFLS, WQRW…AYWM, and ALII…GFVV. Active-site residues include D128 and D146. Residues 141–161 form a helical membrane-spanning segment; it reads AFNLADSTICIGAAMIILDGF.

Belongs to the peptidase A8 family.

The protein resides in the cell inner membrane. It carries out the reaction Release of signal peptides from bacterial membrane prolipoproteins. Hydrolyzes -Xaa-Yaa-Zaa-|-(S,diacylglyceryl)Cys-, in which Xaa is hydrophobic (preferably Leu), and Yaa (Ala or Ser) and Zaa (Gly or Ala) have small, neutral side chains.. It functions in the pathway protein modification; lipoprotein biosynthesis (signal peptide cleavage). Its function is as follows. This protein specifically catalyzes the removal of signal peptides from prolipoproteins. The polypeptide is Lipoprotein signal peptidase (Vibrio cholerae serotype O1 (strain ATCC 39315 / El Tor Inaba N16961)).